An 84-amino-acid chain; its full sequence is Small ribosomal subunit protein uS17 (84 aa).

It belongs to the universal ribosomal protein uS17 family. As to quaternary structure, part of the 30S ribosomal subunit.

Its function is as follows. One of the primary rRNA binding proteins, it binds specifically to the 5'-end of 16S ribosomal RNA. The protein is Small ribosomal subunit protein uS17 of Sodalis glossinidius (strain morsitans).